The primary structure comprises 94 residues: MFKVNEYFDGTVKSIAFEGQEGPATVGVMAPGEYEFGTAKREIMHVVSGALTVKLPGSDNWEKFAAGSQFNVPADSKFQLKVAVDTAYLCEYRD.

This sequence belongs to the nucleoside phosphorylase PpnP family.

The enzyme catalyses a purine D-ribonucleoside + phosphate = a purine nucleobase + alpha-D-ribose 1-phosphate. It catalyses the reaction adenosine + phosphate = alpha-D-ribose 1-phosphate + adenine. It carries out the reaction cytidine + phosphate = cytosine + alpha-D-ribose 1-phosphate. The catalysed reaction is guanosine + phosphate = alpha-D-ribose 1-phosphate + guanine. The enzyme catalyses inosine + phosphate = alpha-D-ribose 1-phosphate + hypoxanthine. It catalyses the reaction thymidine + phosphate = 2-deoxy-alpha-D-ribose 1-phosphate + thymine. It carries out the reaction uridine + phosphate = alpha-D-ribose 1-phosphate + uracil. The catalysed reaction is xanthosine + phosphate = alpha-D-ribose 1-phosphate + xanthine. In terms of biological role, catalyzes the phosphorolysis of diverse nucleosides, yielding D-ribose 1-phosphate and the respective free bases. Can use uridine, adenosine, guanosine, cytidine, thymidine, inosine and xanthosine as substrates. Also catalyzes the reverse reactions. The protein is Pyrimidine/purine nucleoside phosphorylase of Pseudomonas entomophila (strain L48).